The following is a 135-amino-acid chain: Small ribosomal subunit protein uS12 (135 aa).

Position 89 is a 3-methylthioaspartic acid (aspartate 89). Positions 106–135 are disordered; that stretch reads GVKDRKQGRSKYGAKRPKPGQAPAAAGKKK. Positions 113 to 123 are enriched in basic residues; that stretch reads GRSKYGAKRPK. Positions 124–135 are enriched in low complexity; sequence PGQAPAAAGKKK.

This sequence belongs to the universal ribosomal protein uS12 family. In terms of assembly, part of the 30S ribosomal subunit. Contacts proteins S8 and S17. May interact with IF1 in the 30S initiation complex.

Its function is as follows. With S4 and S5 plays an important role in translational accuracy. Interacts with and stabilizes bases of the 16S rRNA that are involved in tRNA selection in the A site and with the mRNA backbone. Located at the interface of the 30S and 50S subunits, it traverses the body of the 30S subunit contacting proteins on the other side and probably holding the rRNA structure together. The combined cluster of proteins S8, S12 and S17 appears to hold together the shoulder and platform of the 30S subunit. The polypeptide is Small ribosomal subunit protein uS12 (Synechococcus sp. (strain JA-3-3Ab) (Cyanobacteria bacterium Yellowstone A-Prime)).